The sequence spans 814 residues: Testis-specific zinc finger protein topi (814 aa).

10 C2H2-type zinc fingers span residues 228–250 (NECTMCDRKFVHASGLVRHMEKH), 275–297 (VKCNSCGRIFYDPQVAFRHGLIH), 360–382 (LQCEFCEYIFADIAELLVHSASH), 429–453 (FVCNVCELKFANTDLLQEHRCTSFH), 467–490 (LPCDFCDVNFEFAHDFLAHSEEKH), 511–533 (YLCDICGKSYTQSSHLWQHLRFH), 539–564 (FVCQEENCDRKFTIRPDLNDHIRKCH), 570–592 (YLCLVCGKRFLTGSVFYQHRLIH), 598–620 (YECEECGKRFYRADALKNHQRIH), and 626–649 (YSCLFCTKTFRQRGDRDKHIRARH). The segment at 669–705 (TAAAQKAQSHNPEQQDNDVAGGASTSDVPSGSGFMST) is disordered. Residues 691-705 (ASTSDVPSGSGFMST) are compositionally biased toward polar residues.

In terms of assembly, interacts with comr. Expressed in testis; primary spermatocytes.

Its subcellular location is the nucleus. Its function is as follows. Required for male meiotic division and spermatid differentiation. Required for accumulation of aly and comr on chromatin. May function as a transcription factor. The protein is Testis-specific zinc finger protein topi (topi) of Drosophila melanogaster (Fruit fly).